Consider the following 285-residue polypeptide: UPF0703 protein YcgQ (285 aa).

A run of 4 helical transmembrane segments spans residues 4 to 24, 34 to 54, 89 to 109, and 210 to 230; these read LLVLMGFTFFFYHLHASGNLT, LSFIAIFLLAILTAVQAYLFI, LIYVVFLFPLVSGIFFPIATL, and FVLRFGIIHCIADSGVYGMLV.

This sequence belongs to the UPF0703 family.

It is found in the cell membrane. The chain is UPF0703 protein YcgQ (ycgQ) from Bacillus subtilis (strain 168).